The following is a 113-amino-acid chain: T cell receptor alpha variable 8-3 (113 aa).

The first 20 residues, 1-20 (MLLELIPLLGIHFVLRTARA), serve as a signal peptide directing secretion. The Ig-like domain maps to 21-113 (QSVTQPDIHI…DAAEYFCAVG (93 aa)). An intrachain disulfide couples cysteine 42 to cysteine 110. Asparagine 43 carries an N-linked (GlcNAc...) asparagine glycan.

Alpha-beta TR is a heterodimer composed of an alpha and beta chain; disulfide-linked. The alpha-beta TR is associated with the transmembrane signaling CD3 coreceptor proteins to form the TR-CD3 (TcR or TCR). The assembly of alpha-beta TR heterodimers with CD3 occurs in the endoplasmic reticulum where a single alpha-beta TR heterodimer associates with one CD3D-CD3E heterodimer, one CD3G-CD3E heterodimer and one CD247 homodimer forming a stable octameric structure. CD3D-CD3E and CD3G-CD3E heterodimers preferentially associate with TR alpha and TR beta chains, respectively. The association of the CD247 homodimer is the last step of TcR assembly in the endoplasmic reticulum and is required for transport to the cell surface.

The protein resides in the cell membrane. Functionally, v region of the variable domain of T cell receptor (TR) alpha chain that participates in the antigen recognition. Alpha-beta T cell receptors are antigen specific receptors which are essential to the immune response and are present on the cell surface of T lymphocytes. Recognize peptide-major histocompatibility (MH) (pMH) complexes that are displayed by antigen presenting cells (APC), a prerequisite for efficient T cell adaptive immunity against pathogens. Binding of alpha-beta TR to pMH complex initiates TR-CD3 clustering on the cell surface and intracellular activation of LCK that phosphorylates the ITAM motifs of CD3G, CD3D, CD3E and CD247 enabling the recruitment of ZAP70. In turn ZAP70 phosphorylates LAT, which recruits numerous signaling molecules to form the LAT signalosome. The LAT signalosome propagates signal branching to three major signaling pathways, the calcium, the mitogen-activated protein kinase (MAPK) kinase and the nuclear factor NF-kappa-B (NF-kB) pathways, leading to the mobilization of transcription factors that are critical for gene expression and essential for T cell growth and differentiation. The T cell repertoire is generated in the thymus, by V-(D)-J rearrangement. This repertoire is then shaped by intrathymic selection events to generate a peripheral T cell pool of self-MH restricted, non-autoaggressive T cells. Post-thymic interaction of alpha-beta TR with the pMH complexes shapes TR structural and functional avidity. This is T cell receptor alpha variable 8-3 from Homo sapiens (Human).